Reading from the N-terminus, the 637-residue chain is ATP-dependent zinc metalloprotease FtsH (637 aa).

The Cytoplasmic portion of the chain corresponds to Met-1–Arg-6. Residues Ser-7–Ser-27 form a helical membrane-spanning segment. Residues Asp-28–Thr-103 are Periplasmic-facing. A helical transmembrane segment spans residues Phe-104–Phe-124. Topologically, residues Met-125–Ser-637 are cytoplasmic. Gly-195–Thr-202 provides a ligand contact to ATP. His-417 is a binding site for Zn(2+). Glu-418 is an active-site residue. Zn(2+) contacts are provided by His-421 and Asp-495. The tract at residues Asp-617–Ser-637 is disordered.

This sequence in the central section; belongs to the AAA ATPase family. The protein in the C-terminal section; belongs to the peptidase M41 family. As to quaternary structure, homohexamer. Zn(2+) is required as a cofactor.

Its subcellular location is the cell inner membrane. Acts as a processive, ATP-dependent zinc metallopeptidase for both cytoplasmic and membrane proteins. Plays a role in the quality control of integral membrane proteins. This chain is ATP-dependent zinc metalloprotease FtsH, found in Rickettsia typhi (strain ATCC VR-144 / Wilmington).